The sequence spans 423 residues: G-protein coupled receptor 83 (423 aa).

The signal sequence occupies residues 1 to 16 (MVPHLLLLCLLPLVRA). Over 18–71 (EPHEGRADEQSAEAALAVPNASHFFSWNNYTFSDWQNFVGRRRYGAESQNPTVK) the chain is Extracellular. N37 and N46 each carry an N-linked (GlcNAc...) asparagine glycan. Residues 72-92 (ALLIVAYSFIIVFSLFGNVLV) form a helical membrane-spanning segment. Topologically, residues 93–107 (CHVIFKNQRMHSATS) are cytoplasmic. A helical transmembrane segment spans residues 108-129 (LFIVNLAVADIMITLLNTPFTL). Topologically, residues 130–145 (VRFVNSTWIFGKGMCH) are extracellular. N134 carries an N-linked (GlcNAc...) asparagine glycan. The cysteines at positions 144 and 224 are disulfide-linked. The chain crosses the membrane as a helical span at residues 146–167 (VSRFAQYCSLHVSALTLTAIAV). At 168–186 (DRHQVIMHPLKPRISITKG) the chain is on the cytoplasmic side. Residues 187–208 (VIYIAVIWTMATFFSLPHAICQ) traverse the membrane as a helical segment. The Extracellular portion of the chain corresponds to 209-238 (KLFTFKYSEDIVRSLCLPDFPEPADLFWKY). Residues 239–260 (LDLATFILLYILPLLIISVAYA) traverse the membrane as a helical segment. The Cytoplasmic segment spans residues 261-293 (RVAKKLWLCNMIGDVTTEQYFALRRKKKKTIKM). The chain crosses the membrane as a helical span at residues 294 to 315 (LMLVVVLFALCWFPLNCYVLLL). At 316–327 (SSKVIRTNNALY) the chain is on the extracellular side. The chain crosses the membrane as a helical span at residues 328–348 (FAFHWFAMSSTCYNPFIYCWL). At 349-423 (NENFRIELKA…SSVEPIVTMS (75 aa)) the chain is on the cytoplasmic side. Residues 402 to 414 (PTSQLQSGKTDLS) show a composition bias toward polar residues. A disordered region spans residues 402–423 (PTSQLQSGKTDLSSVEPIVTMS).

It belongs to the G-protein coupled receptor 1 family. As to expression, highly expressed in the brain and spinal cord, and found in lower concentrations in the thymus and other tissues.

Its subcellular location is the cell membrane. G-protein coupled receptor for PEN, a neuropeptide produced from the precursor protein, proSAAS (encoded by PCSK1N). Acts through a G(i)- and G(q)-alpha-alpha-mediated pathway in response to PEN. Plays a role in food intake and body weight regulation. May contribute to the regulation of anxiety-related behaviors. This chain is G-protein coupled receptor 83, found in Homo sapiens (Human).